The following is a 275-amino-acid chain: Gamma carbonic anhydrase 1, mitochondrial (275 aa).

A mitochondrion-targeting transit peptide spans 1 to 43; sequence MGTLGRAFYSVGFWIRETGQALDRLGCRLQGKNYFREQLSRHR. Substrate is bound by residues 86-88 and 101-102; these read RGD and QD. Residues histidine 107, histidine 130, and histidine 135 each contribute to the Zn(2+) site. Asparagine 209 contributes to the substrate binding site. Residues 256–275 are disordered; that stretch reads LNLPNNILPDKETKRPSNVN. Basic and acidic residues predominate over residues 264 to 275; the sequence is PDKETKRPSNVN.

The protein belongs to the gamma-class carbonic anhydrase family. In terms of assembly, homotrimer. Component of the mitochondrial oxidoreductase respiratory chain complex I; element of the extra matrix-exposed domain, which is attached to the membrane arm of this complex. It depends on Zn(2+) as a cofactor.

The protein localises to the mitochondrion membrane. In terms of biological role, enzyme involved in the catabolism of H(2)CO(3) but that does not mediates the reversible hydration of carbon dioxide. Mediates complex I assembly in mitochondria and respiration. The chain is Gamma carbonic anhydrase 1, mitochondrial (GAMMACA1) from Arabidopsis thaliana (Mouse-ear cress).